A 441-amino-acid chain; its full sequence is Protein arginine methyltransferase NDUFAF7, mitochondrial (441 aa).

A mitochondrion-targeting transit peptide spans 1-46 (MSVLLRSGLGPLCAVARAAIPFIWRGKYFSSGNEPAENPVTPMLRH).

Belongs to the NDUFAF7 family. As to quaternary structure, interacts with NDUFS2.

Its subcellular location is the mitochondrion. The enzyme catalyses L-arginyl-[protein] + 2 S-adenosyl-L-methionine = N(omega),N(omega)'-dimethyl-L-arginyl-[protein] + 2 S-adenosyl-L-homocysteine + 2 H(+). In terms of biological role, arginine methyltransferase involved in the assembly or stability of mitochondrial NADH:ubiquinone oxidoreductase complex (complex I). Acts by mediating symmetric dimethylation of 'Arg-118' of NDUFS2 after it assembles into the complex I, stabilizing the early intermediate complex. The polypeptide is Protein arginine methyltransferase NDUFAF7, mitochondrial (Homo sapiens (Human)).